We begin with the raw amino-acid sequence, 55 residues long: Ferredoxin (55 aa).

4Fe-4S ferredoxin-type domains are found at residues 2–27 (YKITDGCINCGACEPECPVEAISESD) and 28–55 (AVRVIDADKCIDCGACANTCPVDAIVEG). [4Fe-4S] cluster is bound by residues Cys8, Cys11, Cys14, Cys18, Cys37, Cys40, Cys43, and Cys47.

The cofactor is [4Fe-4S] cluster.

Functionally, ferredoxins are iron-sulfur proteins that transfer electrons in a wide variety of metabolic reactions. The chain is Ferredoxin from Clostridium sp. (strain M-E).